Here is a 296-residue protein sequence, read N- to C-terminus: MINAKQVPTADMSCQLLYISESQACQVYSLQALIAEHELSIILNVERYVDKLNQKRRQQLSQESTQPVLLLDDKNKLSWLSDGLSIAPEWDKLQRRVVSAGRKSELLLQATKMTADSKVIDATAGFGHDSLILASTGAQVTMLEQHPLMALLLLAEQQRMSTLPNWQKLMSRLHIINTDALSYFARFNNYLEADNEQAVDVVYLDPMFPEDSYQDSKTGKGAKVGKHMQALHQLVCPPTLDEEQKLLQSAQTFVSQQAQKQGRVIVKRPQFAPLLAHLEPSESWSNEAVRFDGYFV.

Asp-205 is an S-adenosyl-L-methionine binding site.

The protein belongs to the methyltransferase superfamily. RsmJ family.

The protein localises to the cytoplasm. It carries out the reaction guanosine(1516) in 16S rRNA + S-adenosyl-L-methionine = N(2)-methylguanosine(1516) in 16S rRNA + S-adenosyl-L-homocysteine + H(+). In terms of biological role, specifically methylates the guanosine in position 1516 of 16S rRNA. In Psychrobacter arcticus (strain DSM 17307 / VKM B-2377 / 273-4), this protein is Ribosomal RNA small subunit methyltransferase J.